Here is a 279-residue protein sequence, read N- to C-terminus: NH(3)-dependent NAD(+) synthetase (279 aa).

46 to 53 (GISGGQDS) serves as a coordination point for ATP. Asp52 is a Mg(2+) binding site. Arg145 is a deamido-NAD(+) binding site. Residue Thr165 participates in ATP binding. Mg(2+) is bound at residue Glu170. Deamido-NAD(+) contacts are provided by Lys178 and Asp185. Lys194 and Thr216 together coordinate ATP. Deamido-NAD(+) is bound at residue 265–266 (HK).

The protein belongs to the NAD synthetase family. In terms of assembly, homodimer.

The enzyme catalyses deamido-NAD(+) + NH4(+) + ATP = AMP + diphosphate + NAD(+) + H(+). It functions in the pathway cofactor biosynthesis; NAD(+) biosynthesis; NAD(+) from deamido-NAD(+) (ammonia route): step 1/1. Its function is as follows. Catalyzes the ATP-dependent amidation of deamido-NAD to form NAD. Uses ammonia as a nitrogen source. The polypeptide is NH(3)-dependent NAD(+) synthetase (Rhodococcus opacus (strain B4)).